The chain runs to 95 residues: Neutrophil antibiotic peptide NP-4 (95 aa).

Residues 1-19 form the signal peptide; the sequence is MRTLALLAAILLVTLQAQA. The propeptide occupies 20-62; sequence ELHSGMADDGVDQQQPRAQDLDVAVYIKQDETSPLEVLGAKAG. Cystine bridges form between cysteine 65-cysteine 93, cysteine 67-cysteine 82, and cysteine 72-cysteine 92.

It belongs to the alpha-defensin family.

The protein resides in the secreted. Functionally, microbicidal activity. This is Neutrophil antibiotic peptide NP-4 from Oryctolagus cuniculus (Rabbit).